The chain runs to 296 residues: Glycine--tRNA ligase alpha subunit (296 aa).

It belongs to the class-II aminoacyl-tRNA synthetase family. Tetramer of two alpha and two beta subunits.

The protein resides in the cytoplasm. The enzyme catalyses tRNA(Gly) + glycine + ATP = glycyl-tRNA(Gly) + AMP + diphosphate. The protein is Glycine--tRNA ligase alpha subunit of Polynucleobacter necessarius subsp. necessarius (strain STIR1).